The chain runs to 159 residues: Ribosomal RNA large subunit methyltransferase H (159 aa).

S-adenosyl-L-methionine is bound by residues Leu76, Gly108, and 127–132; that span reads FSKMTF.

It belongs to the RNA methyltransferase RlmH family. As to quaternary structure, homodimer.

It localises to the cytoplasm. The catalysed reaction is pseudouridine(1915) in 23S rRNA + S-adenosyl-L-methionine = N(3)-methylpseudouridine(1915) in 23S rRNA + S-adenosyl-L-homocysteine + H(+). In terms of biological role, specifically methylates the pseudouridine at position 1915 (m3Psi1915) in 23S rRNA. The chain is Ribosomal RNA large subunit methyltransferase H from Staphylococcus carnosus (strain TM300).